Consider the following 257-residue polypeptide: Protein orai-2 (257 aa).

The next 4 helical transmembrane spans lie at 67–84 (TSAL…EVQL), 95–115 (LIAF…ALLI), 149–169 (LAWG…VVLL), and 199–219 (AALV…VFTI).

Belongs to the Orai family.

The protein resides in the membrane. In terms of biological role, ca(2+) release-activated Ca(2+)-like (CRAC-like) channel subunit which mediates Ca(2+) influx and increase in Ca(2+)-selective current by synergy with the Ca(2+) sensor, STIM1. This is Protein orai-2 (ORAI2) from Gallus gallus (Chicken).